We begin with the raw amino-acid sequence, 353 residues long: Putative glycosyltransferase TagX (353 aa).

It belongs to the glycosyltransferase 2 family.

The chain is Putative glycosyltransferase TagX (tagX) from Staphylococcus aureus (strain MRSA252).